The primary structure comprises 46 residues: Peroxidase 1 (46 aa).

The protein belongs to the peroxidase family. Classical plant (class III) peroxidase subfamily. The cofactor is heme b. It depends on Ca(2+) as a cofactor.

It localises to the secreted. It carries out the reaction 2 a phenolic donor + H2O2 = 2 a phenolic radical donor + 2 H2O. In terms of biological role, removal of H(2)O(2), oxidation of toxic reductants, biosynthesis and degradation of lignin, suberization, auxin catabolism, response to environmental stresses such as wounding, pathogen attack and oxidative stress. These functions might be dependent on each isozyme/isoform in each plant tissue. The polypeptide is Peroxidase 1 (Catharanthus roseus (Madagascar periwinkle)).